We begin with the raw amino-acid sequence, 190 residues long: MRGLRPALSTFLFLLLITGGVYPLLTTALGQWWFPWQANGSLIREGDTVRGSALIGQNFTGNGYFHGRPSATAEMPYNPQASGGSNLAVSNPELDKQIAARVAELRAANPDASTNVPVELVTASASGLDNNITPQAAAWQIPRVAKARNLSVEQLTQLIAKYSQQPLVKYIGQPVVNIVELNLALDKLDE.

The helical transmembrane segment at 10–30 (TFLFLLLITGGVYPLLTTALG) threads the bilayer.

Belongs to the KdpC family. As to quaternary structure, the system is composed of three essential subunits: KdpA, KdpB and KdpC.

It localises to the cell inner membrane. In terms of biological role, part of the high-affinity ATP-driven potassium transport (or Kdp) system, which catalyzes the hydrolysis of ATP coupled with the electrogenic transport of potassium into the cytoplasm. This subunit acts as a catalytic chaperone that increases the ATP-binding affinity of the ATP-hydrolyzing subunit KdpB by the formation of a transient KdpB/KdpC/ATP ternary complex. This Escherichia coli O127:H6 (strain E2348/69 / EPEC) protein is Potassium-transporting ATPase KdpC subunit.